The sequence spans 328 residues: Phosphate acyltransferase (328 aa).

This sequence belongs to the PlsX family. In terms of assembly, homodimer. Probably interacts with PlsY.

The protein resides in the cytoplasm. It carries out the reaction a fatty acyl-[ACP] + phosphate = an acyl phosphate + holo-[ACP]. Its pathway is lipid metabolism; phospholipid metabolism. Catalyzes the reversible formation of acyl-phosphate (acyl-PO(4)) from acyl-[acyl-carrier-protein] (acyl-ACP). This enzyme utilizes acyl-ACP as fatty acyl donor, but not acyl-CoA. This Mycoplasma genitalium (strain ATCC 33530 / DSM 19775 / NCTC 10195 / G37) (Mycoplasmoides genitalium) protein is Phosphate acyltransferase.